Here is a 406-residue protein sequence, read N- to C-terminus: Argininosuccinate synthase (406 aa).

ATP-binding positions include 12–20 (AYSGGLDTS) and alanine 39. The L-citrulline site is built by tyrosine 90 and serine 95. Glycine 120 contacts ATP. Residues threonine 122, asparagine 126, and aspartate 127 each coordinate L-aspartate. Asparagine 126 contributes to the L-citrulline binding site. Residues arginine 130, serine 179, serine 188, glutamate 264, and tyrosine 276 each coordinate L-citrulline.

It belongs to the argininosuccinate synthase family. Type 1 subfamily. Homotetramer.

It localises to the cytoplasm. It carries out the reaction L-citrulline + L-aspartate + ATP = 2-(N(omega)-L-arginino)succinate + AMP + diphosphate + H(+). Its pathway is amino-acid biosynthesis; L-arginine biosynthesis; L-arginine from L-ornithine and carbamoyl phosphate: step 2/3. The sequence is that of Argininosuccinate synthase from Geobacter sp. (strain M21).